The primary structure comprises 304 residues: MSGAERRPAAGRVQLDSKPTPTTTADGNQNITEVDAFDKRQTFDPAVQYKMNHQRRGVALIFNHEHFFWHLRLPDRRGTLADRNNLKRSLTDLGFEVRIFDDLKAEDVLKKVFEASRDDYSNADCFVCVFLSHGENDHVYAYDAQIKIETITNMFRGDKCQSLVGKPKIFIIQACRGDKHDDPVLVQDSVDSKDETTVNQTEVDAAGVYTLPAGADFIMCYSVAQGYFSHRETVNGSWYIQDLCEALGKHGSSLEFTELLTVVNRKVSHRKVDICRDINAIGKKQIPCFASMLTKKLYFHPKSK.

The interval 1-29 is disordered; sequence MSGAERRPAAGRVQLDSKPTPTTTADGNQ. The propeptide occupies 1–35; sequence MSGAERRPAAGRVQLDSKPTPTTTADGNQNITEVD. The span at 17 to 29 shows a compositional bias: polar residues; it reads SKPTPTTTADGNQ. A tri-arginine exosite region spans residues 54 to 56; that stretch reads QRR. The active site involves His133. Residues 137-154 are 130's region; it reads DHVYAYDAQIKIETITNM. Residue Cys175 is part of the active site. A propeptide spanning residues 192-204 is cleaved from the precursor; sequence SKDETTVNQTEVD.

This sequence belongs to the peptidase C14A family. Heterotetramer that consists of two anti-parallel arranged heterodimers, each one formed by a 18 kDa (p18) and a 11 kDa (p11) subunit. As to quaternary structure, heterotetramer that consists of two anti-parallel arranged heterodimers, each one formed by a 18 kDa (Caspase-6 subunit p18) and a 11 kDa (Caspase-6 subunit p11) subunit. Widely expressed.

It localises to the cytoplasm. It is found in the nucleus. It catalyses the reaction Strict requirement for Asp at position P1 and has a preferred cleavage sequence of Val-Glu-His-Asp-|-.. Its activity is regulated as follows. During activation, the N-terminal prodomain is removed by cleavage. Concomitantly, double cleavage gives rise to a large 18-kDa and a small 11-kDa subunit. The two large and two small subunits then assemble to form the active CASP6 complex. Intramolecular cleavage at Asp-191 is a prerequisite for CASP6 self-activation. In terms of biological role, cysteine protease that plays essential roles in programmed cell death, development and innate immunity. Acts as a non-canonical executioner caspase during apoptosis: localizes in the nucleus and cleaves the nuclear structural protein lamin-A/LMNA thereby inducing nuclear shrinkage and fragmentation. Lamin-A/LMNA cleavage is required for chromatin condensation and nuclear disassembly during apoptotic execution. Plays an essential role in defense against viruses by acting as a central mediator of the ZBP1-mediated pyroptosis, apoptosis, and necroptosis (PANoptosis), independently of its cysteine protease activity. PANoptosis is a unique inflammatory programmed cell death, which provides a molecular scaffold that allows the interactions and activation of machinery required for inflammasome/pyroptosis, apoptosis and necroptosis. The polypeptide is Caspase-6 (Gallus gallus (Chicken)).